The sequence spans 517 residues: 2,4,6-trichlorophenol monooxygenase (517 aa).

Belongs to the FADH(2)-utilizing monooxygenase family. In terms of assembly, homotetramer in solution.

The enzyme catalyses 2,4,6-trichlorophenol + FADH2 + O2 = 2-chloro-6-hydroxy-1,4-benzoquinone + FAD + 2 chloride + 3 H(+). It carries out the reaction 2,4,6-trichlorophenol + FADH2 + O2 = 2,6-dichlorobenzoquinone + FAD + chloride + H2O + H(+). The catalysed reaction is 2,6-dichlorobenzoquinone + H2O = 2-chloro-6-hydroxy-1,4-benzoquinone + chloride + 2 H(+). It functions in the pathway aromatic compound metabolism. Its pathway is xenobiotic degradation. In terms of biological role, involved in the degradation of 2,4,6-trichlorophenol (2,4,6-TCP). Catalyzes the conversion of 2,4,6-TCP to 6-chlorohydroxyquinol (6-CHQ). The monooxygenase oxidizes 2,4,6-TCP to 2,6-dichloroquinone (2,6-DCBQ), which remains with the enzyme and is hydrolyzed to 2-chlorohydroxyquinone. 2-chlorohydroxyquinone is chemically reduced by ascorbate and NADH to 6-chlorohydroxyquinol (6-CHQ). In Cupriavidus pinatubonensis (strain JMP 134 / LMG 1197) (Cupriavidus necator (strain JMP 134)), this protein is 2,4,6-trichlorophenol monooxygenase.